Reading from the N-terminus, the 207-residue chain is Outer-membrane lipoprotein carrier protein (207 aa).

Positions 1–23 (MMKPHNLFQFLAVCSLTVAVASA) are cleaved as a signal peptide.

Belongs to the LolA family. Monomer.

It localises to the periplasm. Participates in the translocation of lipoproteins from the inner membrane to the outer membrane. Only forms a complex with a lipoprotein if the residue after the N-terminal Cys is not an aspartate (The Asp acts as a targeting signal to indicate that the lipoprotein should stay in the inner membrane). The sequence is that of Outer-membrane lipoprotein carrier protein from Neisseria gonorrhoeae (strain ATCC 700825 / FA 1090).